A 396-amino-acid polypeptide reads, in one-letter code: Lipid-A-disaccharide synthase (396 aa).

Belongs to the LpxB family.

It carries out the reaction a lipid X + a UDP-2-N,3-O-bis[(3R)-3-hydroxyacyl]-alpha-D-glucosamine = a lipid A disaccharide + UDP + H(+). The protein operates within bacterial outer membrane biogenesis; LPS lipid A biosynthesis. Functionally, condensation of UDP-2,3-diacylglucosamine and 2,3-diacylglucosamine-1-phosphate to form lipid A disaccharide, a precursor of lipid A, a phosphorylated glycolipid that anchors the lipopolysaccharide to the outer membrane of the cell. This Nitrobacter winogradskyi (strain ATCC 25391 / DSM 10237 / CIP 104748 / NCIMB 11846 / Nb-255) protein is Lipid-A-disaccharide synthase.